Consider the following 379-residue polypeptide: Cell division protein FtsZ (379 aa).

GTP-binding positions include 18-22, 105-107, E136, R140, and D184; these read GGGVN and GTG.

It belongs to the FtsZ family. In terms of assembly, homodimer. Polymerizes to form a dynamic ring structure in a strictly GTP-dependent manner. Interacts directly with several other division proteins.

The protein localises to the cytoplasm. Functionally, essential cell division protein that forms a contractile ring structure (Z ring) at the future cell division site. The regulation of the ring assembly controls the timing and the location of cell division. One of the functions of the FtsZ ring is to recruit other cell division proteins to the septum to produce a new cell wall between the dividing cells. Binds GTP and shows GTPase activity. This is Cell division protein FtsZ from Mycobacterium leprae (strain TN).